The chain runs to 260 residues: Sugar fermentation stimulation protein homolog (260 aa).

It belongs to the SfsA family.

The sequence is that of Sugar fermentation stimulation protein homolog from Chloroflexus aggregans (strain MD-66 / DSM 9485).